The primary structure comprises 391 residues: Tumor susceptibility gene 101 protein (391 aa).

An N-acetylalanine modification is found at Ala2. Residues Ala2–Pro145 enclose the UEV domain. Residues Pro159–Ser163 form an interaction with CEP55 region. The disordered stretch occupies residues Gly195–Ile222. Polar residues predominate over residues Thr200–Gly215. Thr221 is subject to Phosphothreonine. The stretch at Lys238 to Glu317 forms a coiled coil. The PTAP motif signature appears at Pro321–Pro324. One can recognise an SB domain in the interval Ala323–Tyr391.

This sequence belongs to the ubiquitin-conjugating enzyme family. UEV subfamily. Component of the ESCRT-I complex (endosomal sorting complex required for transport I) which consists of TSG101, VPS28, a VPS37 protein (VPS37A to -D) and MVB12A or MVB12B in a 1:1:1:1 stoichiometry. Interacts with VPS37A, VPS37B and VPS37C. Interacts with DMAP1. Interacts with ubiquitin. Interacts with AATF. Interacts with stathmin and GMCL. Component of an ESCRT-I complex (endosomal sorting complex required for transport I) which consists of TSG101, VPS28, VPS37A and UBAP1 in a 1:1:1:1 stoichiometry. Interacts with HGS; the interaction mediates the association with the ESCRT-0 complex. Interacts with GGA1 and GGA3. Interacts (via UEV domain) with PDCD6IP/AIP1. Interacts with VPS28, SNF8 and VPS36. Self-associates. Interacts with MVB12A; the association appears to be mediated by the TSG101-VPS37 binary subcomplex. Interacts with VPS37D. Interacts with LRSAM1. Interacts with CEP55; the interaction is required for cytokinesis. Interacts with PDCD6. Interacts with LITAF. Interacts with MGRN1. Interacts with ARRDC1; recruits TSG101 to the plasma membrane. In terms of processing, monoubiquitinated at multiple sites by LRSAM1 and by MGRN1. Ubiquitination inactivates it, possibly by regulating its shuttling between an active membrane-bound protein and an inactive soluble form. Ubiquitination by MGRN1 requires the presence of UBE2D1.

The protein localises to the cytoplasm. It is found in the early endosome membrane. It localises to the late endosome membrane. The protein resides in the cytoskeleton. Its subcellular location is the microtubule organizing center. The protein localises to the centrosome. It is found in the midbody. It localises to the midbody ring. The protein resides in the nucleus. Functionally, component of the ESCRT-I complex, a regulator of vesicular trafficking process. Binds to ubiquitinated cargo proteins and is required for the sorting of endocytic ubiquitinated cargos into multivesicular bodies (MVBs). Mediates the association between the ESCRT-0 and ESCRT-I complex. Required for completion of cytokinesis; the function requires CEP55. May be involved in cell growth and differentiation. Acts as a negative growth regulator. Required for the exosomal release of SDCBP, CD63 and syndecan. It may also play a role in the extracellular release of microvesicles that differ from the exosomes. The chain is Tumor susceptibility gene 101 protein (Tsg101) from Rattus norvegicus (Rat).